A 567-amino-acid polypeptide reads, in one-letter code: Alpha-glucosidase (567 aa).

An N-terminal signal peptide occupies residues 1-17 (MKAVIVFCLMALSIVDA). N-linked (GlcNAc...) asparagine glycosylation is found at Asn-88 and Asn-123. The Nucleophile role is filled by Asp-223. Asn-247 carries an N-linked (GlcNAc...) asparagine glycan. Catalysis depends on Glu-286, which acts as the Proton donor. 5 N-linked (GlcNAc...) asparagine glycosylation sites follow: Asn-290, Asn-313, Asn-319, Asn-499, and Asn-507.

In terms of assembly, monomer. In terms of tissue distribution, expressed specifically in the hypopharyngeal glands of worker bees. Also found in the brain of worker bees (at protein level).

It carries out the reaction Hydrolysis of terminal, non-reducing (1-&gt;4)-linked alpha-D-glucose residues with release of alpha-D-glucose.. Functionally, converts sucrose in nectar to glucose and fructose. The sequence is that of Alpha-glucosidase from Apis mellifera (Honeybee).